A 475-amino-acid polypeptide reads, in one-letter code: MKNFQDKVKKLVAEMRRVNQIHFIGIGGAGMSGIAEVLLNEGYQISGSDIADGAVTQRLAKAGAKVFIGHQAENIEGASVVVASSAINESNPEVAAAKEARIPVIQRAQMLAEIMRFRHGIAIAGTHGKTTTTAMISMIYTEAGLDPTFVNGGLVKSAGKNAHLGASRYLIAEADESDASFLHLQPMVSVVTNIEPDHMDTYGGDFEKMKETYVRFLRNLPFYGLAVMCADDETVMEIAPKVGRQVISYGFSEKADYRIEDYQQTGFQGHYTVVCPTGERIEILLNVPGRHNALNATAALAVAKEEGIANEAILAALADFQGAGRRFDQLGSFIRPNGKVMLVDDYGHHPTEVDVTIKAARQGWENKRVVMVFQPHRYSRTRDLFDDFVQVLSQVDALIMLNVYAAGEAPIVGAESKDLCRSIRNLGKVDPILVSDTSQLGEVLDQIIQDGDLILAQGAGNVSKLSRDLAESWKA.

125-131 (GTHGKTT) contacts ATP.

Belongs to the MurCDEF family.

The protein localises to the cytoplasm. The catalysed reaction is UDP-N-acetyl-alpha-D-muramate + L-alanine + ATP = UDP-N-acetyl-alpha-D-muramoyl-L-alanine + ADP + phosphate + H(+). It participates in cell wall biogenesis; peptidoglycan biosynthesis. Its function is as follows. Cell wall formation. This Glaesserella parasuis serovar 5 (strain SH0165) (Haemophilus parasuis) protein is UDP-N-acetylmuramate--L-alanine ligase.